Consider the following 136-residue polypeptide: uncharacterized protein (136 aa).

This is an uncharacterized protein from Pasteurella multocida (strain Pm70).